Consider the following 490-residue polypeptide: Glycine--tRNA ligase (490 aa).

Substrate contacts are provided by Arg-99 and Glu-163. ATP-binding positions include 195-197 (RNE), 205-210 (FRTREF), 282-283 (EL), and 326-329 (GLTR). Position 210-214 (210-214 (FEQME)) interacts with substrate. 322 to 326 (EPAAG) provides a ligand contact to substrate. The segment at 470-490 (PVEMGGEPWPESGVQEAGGLY) is disordered.

The protein belongs to the class-II aminoacyl-tRNA synthetase family. In terms of assembly, homodimer.

The protein localises to the cytoplasm. It catalyses the reaction tRNA(Gly) + glycine + ATP = glycyl-tRNA(Gly) + AMP + diphosphate. Functionally, catalyzes the attachment of glycine to tRNA(Gly). This Bifidobacterium longum (strain NCC 2705) protein is Glycine--tRNA ligase.